Here is a 421-residue protein sequence, read N- to C-terminus: Imidazolonepropionase (421 aa).

Fe(3+)-binding residues include H81 and H83. The Zn(2+) site is built by H81 and H83. Positions 90, 153, and 186 each coordinate 4-imidazolone-5-propanoate. Residue Y153 participates in N-formimidoyl-L-glutamate binding. H251 contacts Fe(3+). H251 serves as a coordination point for Zn(2+). Residue E254 coordinates 4-imidazolone-5-propanoate. D326 serves as a coordination point for Fe(3+). D326 serves as a coordination point for Zn(2+). Positions 328 and 330 each coordinate N-formimidoyl-L-glutamate. S331 serves as a coordination point for 4-imidazolone-5-propanoate.

This sequence belongs to the metallo-dependent hydrolases superfamily. HutI family. It depends on Zn(2+) as a cofactor. Fe(3+) is required as a cofactor.

The protein resides in the cytoplasm. The catalysed reaction is 4-imidazolone-5-propanoate + H2O = N-formimidoyl-L-glutamate. It functions in the pathway amino-acid degradation; L-histidine degradation into L-glutamate; N-formimidoyl-L-glutamate from L-histidine: step 3/3. In terms of biological role, catalyzes the hydrolytic cleavage of the carbon-nitrogen bond in imidazolone-5-propanoate to yield N-formimidoyl-L-glutamate. It is the third step in the universal histidine degradation pathway. The polypeptide is Imidazolonepropionase (Streptococcus pyogenes serotype M12 (strain MGAS2096)).